The sequence spans 135 residues: Galectin-1 (135 aa).

A2 is modified (N-acetylalanine). The Galectin domain occupies 4–135 (GLVASNLNLK…DFKIKCVAFE (132 aa)). K13, K19, and K29 each carry N6-acetyllysine. The residue at position 30 (S30) is a Phosphoserine. Residues 45-49 (HFNPR), H53, N62, and 69-72 (WGTE) contribute to the a beta-D-galactoside site. At K108 the chain carries N6-acetyllysine; alternate. K108 carries the N6-succinyllysine; alternate modification. The residue at position 128 (K128) is an N6-acetyllysine.

In terms of assembly, homodimer. Binds LGALS3BP. Interacts with CD2, CD3, CD4, CD6, CD7, CD43, ALCAM and CD45. Interacts with laminin (via poly-N-acetyllactosamine). Interacts with SUSD2. Interacts with cargo receptor TMED10; the interaction mediates the translocation from the cytoplasm into the ERGIC (endoplasmic reticulum-Golgi intermediate compartment) and thereby secretion. Interacts with CD69.

The protein resides in the secreted. The protein localises to the extracellular space. It localises to the extracellular matrix. Its subcellular location is the cytoplasm. Functionally, lectin that binds beta-galactoside and a wide array of complex carbohydrates. Plays a role in regulating apoptosis, cell proliferation and cell differentiation. Inhibits CD45 protein phosphatase activity and therefore the dephosphorylation of Lyn kinase. Strong inducer of T-cell apoptosis. Plays a negative role in Th17 cell differentiation via activation of the receptor CD69. This Mus musculus (Mouse) protein is Galectin-1 (Lgals1).